Reading from the N-terminus, the 245-residue chain is MNYPQEKIKPYSNDGKKSEQVEQMFDNIAPAYDQLNHTLSLGIDRSWRRKAINWLKPFRPQQIMDVATGTGDFAILACHELQPEQLIGTDISEGMMNVGREKVKKEGLSEKISFAREDCTSLSFADNRFDAITVAFGIRNFEDLDKGLSEMYRVLKTGGHLVILELTTPDRFPMKQMFTIYSKIVIPTLGKLLSKDNSAYSYLPQTIKAFPQGEVMKNVISRVGFSQVQFRRLTFGICTLYTATK.

S-adenosyl-L-methionine-binding positions include threonine 70, aspartate 90, and 118–119; that span reads DC.

Belongs to the class I-like SAM-binding methyltransferase superfamily. MenG/UbiE family.

The enzyme catalyses a 2-demethylmenaquinol + S-adenosyl-L-methionine = a menaquinol + S-adenosyl-L-homocysteine + H(+). Its pathway is quinol/quinone metabolism; menaquinone biosynthesis; menaquinol from 1,4-dihydroxy-2-naphthoate: step 2/2. Its function is as follows. Methyltransferase required for the conversion of demethylmenaquinol (DMKH2) to menaquinol (MKH2). This chain is Demethylmenaquinone methyltransferase, found in Bacteroides fragilis (strain ATCC 25285 / DSM 2151 / CCUG 4856 / JCM 11019 / LMG 10263 / NCTC 9343 / Onslow / VPI 2553 / EN-2).